Reading from the N-terminus, the 744-residue chain is Probable ubiquitin carboxyl-terminal hydrolase MINDY-4 (744 aa).

A phosphoserine mark is found at serine 143, serine 220, and serine 224. Positions 211-358 (GMMAGPVASS…QLVSDRTDDK (148 aa)) are disordered. Positions 265-277 (VPDSSSDSVSRSP) are enriched in low complexity. Residues 290-299 (NVTSSSQGLS) are compositionally biased toward polar residues. Serine 295 is modified (phosphoserine). Positions 300-310 (QRDRPRLRSVS) are enriched in basic and acidic residues. Cysteine 443 (nucleophile) is an active-site residue. Residue histidine 664 is the Proton acceptor of the active site.

Belongs to the MINDY deubiquitinase family. FAM188 subfamily.

It carries out the reaction Thiol-dependent hydrolysis of ester, thioester, amide, peptide and isopeptide bonds formed by the C-terminal Gly of ubiquitin (a 76-residue protein attached to proteins as an intracellular targeting signal).. Its function is as follows. Probable hydrolase that can remove 'Lys-48'-linked conjugated ubiquitin from proteins. This chain is Probable ubiquitin carboxyl-terminal hydrolase MINDY-4 (Mindy4), found in Mus musculus (Mouse).